We begin with the raw amino-acid sequence, 412 residues long: MDGRTLGLWLLPPVVGGIIGYFTNDLAIRMLFRPYRPVVIGGWQLPFTPGLIPANQGRLARRIADAILGSLLTPDALHDLARRLLELPRLEAAIAWLVSLLLERLREVRDPRSIEVAADVLRDLAGSALPRWLRAIVRQRQGLDAQIDRWFEQQLLSQKLGPLQAQQLGDWLLEGAFPPDQIRRVMLDFLTDDNIRNLDRIVRDRTRGTDWVIANLFGVQSSLQRLRQFLREQPEAGDAVIAELSQRLALRQQLSQALQTFQLTDLPQTTLTDLRLQLRQGLRQWLDQDGLSLLEGALGGLDWTAAARALLDRLRTAVISDEAIAAFRHEVALILDQRLEHELEDLVAAALPILALEDLIIGRVEATPAADLEAAIQGIVRSELQAIVNIGGVLGVLLGCVQSLINVWSLST.

The next 2 membrane-spanning stretches (helical) occupy residues 8–28 and 390–410; these read LWLL…DLAI and IGGV…VWSL.

It belongs to the UPF0754 family.

The protein localises to the cell inner membrane. In Synechococcus sp. (strain ATCC 27144 / PCC 6301 / SAUG 1402/1) (Anacystis nidulans), this protein is UPF0754 membrane protein syc0451_d.